A 262-amino-acid chain; its full sequence is Ribosomal RNA small subunit methyltransferase A (262 aa).

Residues Asn20, Leu22, Gly47, Glu68, Asp90, and Asn110 each contribute to the S-adenosyl-L-methionine site.

This sequence belongs to the class I-like SAM-binding methyltransferase superfamily. rRNA adenine N(6)-methyltransferase family. RsmA subfamily.

The protein resides in the cytoplasm. It catalyses the reaction adenosine(1518)/adenosine(1519) in 16S rRNA + 4 S-adenosyl-L-methionine = N(6)-dimethyladenosine(1518)/N(6)-dimethyladenosine(1519) in 16S rRNA + 4 S-adenosyl-L-homocysteine + 4 H(+). Functionally, specifically dimethylates two adjacent adenosines (A1518 and A1519) in the loop of a conserved hairpin near the 3'-end of 16S rRNA in the 30S particle. May play a critical role in biogenesis of 30S subunits. The sequence is that of Ribosomal RNA small subunit methyltransferase A from Chlorobium phaeobacteroides (strain BS1).